The sequence spans 87 residues: Small ribosomal subunit protein bS16c (87 aa).

Belongs to the bacterial ribosomal protein bS16 family.

Its subcellular location is the plastid. The protein resides in the chloroplast. The sequence is that of Small ribosomal subunit protein bS16c from Zygnema circumcarinatum (Green alga).